The chain runs to 156 residues: Cyanate hydratase (156 aa).

Active-site residues include R96, E99, and S122.

This sequence belongs to the cyanase family.

It catalyses the reaction cyanate + hydrogencarbonate + 3 H(+) = NH4(+) + 2 CO2. Catalyzes the reaction of cyanate with bicarbonate to produce ammonia and carbon dioxide. In Photorhabdus laumondii subsp. laumondii (strain DSM 15139 / CIP 105565 / TT01) (Photorhabdus luminescens subsp. laumondii), this protein is Cyanate hydratase.